Reading from the N-terminus, the 375-residue chain is 2-heptyl-3-hydroxy-4(1H)-quinolone synthase (375 aa).

This sequence belongs to the 3-hydroxybenzoate 6-hydroxylase family.

It catalyses the reaction 2-heptyl-4(1H)-quinolone + NADH + O2 + H(+) = 2-heptyl-3-hydroxy-4(1H)-quinolone + NAD(+) + H2O. Involved in the degradation pathway of the Pseudomonas aeruginosa quorum sensing signal molecule HHQ (2-heptyl-4(1H)-quinolone) to anthranilate. Catalyzes the hydroxylation of HHQ to PQS (2-heptyl-3-hydroxy-4(1H)-quinolone). This is 2-heptyl-3-hydroxy-4(1H)-quinolone synthase from Mycobacteroides abscessus (strain ATCC 19977 / DSM 44196 / CCUG 20993 / CIP 104536 / JCM 13569 / NCTC 13031 / TMC 1543 / L948) (Mycobacterium abscessus).